Consider the following 88-residue polypeptide: Alpha-latrotoxin-associated low molecular weight protein (88 aa).

An N-terminal signal peptide occupies residues 1 to 18 (MSKLFFVVFLCLIISVFA).

This sequence belongs to the arthropod CHH/MIH/GIH/VIH hormone family. Expressed by the venom gland.

It is found in the secreted. Functionally, may increase the toxicity of alpha-latrotoxin and/or other venom components. Is non-toxic to mice and to the cockroach Periplaneta americana. The sequence is that of Alpha-latrotoxin-associated low molecular weight protein from Latrodectus tredecimguttatus (Mediterranean black widow spider).